A 170-amino-acid polypeptide reads, in one-letter code: MSTPARRRLMRDFKRMKEDAPPGVSASPLPDNVMVWNAMIIGPADTPYEDGTFRLLLEFDEEYPNKPPHVKFLSEMFHPNVYANGEICLDILQNRWTPTYDVASILTSIQSLFNDPNPASPANVEAATLFKDHKSQYVKRVKETVEKSWEDDLKDMDDGDDDDDDDDDDD.

The UBC core domain occupies 4-150 (PARRRLMRDF…VKETVEKSWE (147 aa)). The active-site Glycyl thioester intermediate is the cysteine 88. Residues 148–170 (SWEDDLKDMDDGDDDDDDDDDDD) are disordered. Residues 152 to 170 (DLKDMDDGDDDDDDDDDDD) show a composition bias toward acidic residues.

Belongs to the ubiquitin-conjugating enzyme family.

It localises to the cytoplasm. Its subcellular location is the nucleus. The enzyme catalyses S-ubiquitinyl-[E1 ubiquitin-activating enzyme]-L-cysteine + [E2 ubiquitin-conjugating enzyme]-L-cysteine = [E1 ubiquitin-activating enzyme]-L-cysteine + S-ubiquitinyl-[E2 ubiquitin-conjugating enzyme]-L-cysteine.. It functions in the pathway protein modification; protein ubiquitination. Catalyzes the covalent attachment of ubiquitin to other proteins. Plays a role in transcription regulation by catalyzing the monoubiquitination of histone H2B to form H2BK123ub1. H2BK123ub1 gives a specific tag for epigenetic transcriptional activation and is also a prerequisite for H3K4me and H3K79me formation. Also involved in postreplication repair of UV-damaged DNA, in N-end rule-dependent protein degradation and in sporulation. The sequence is that of Ubiquitin-conjugating enzyme E2 2 (UBC2) from Eremothecium gossypii (strain ATCC 10895 / CBS 109.51 / FGSC 9923 / NRRL Y-1056) (Yeast).